The sequence spans 1765 residues: MRRSKADVERYVASVLGLTPSPRQKSMKGFYFAKLYYEAKEYDLAKKYICTYINVQERDPKAHRFLGLLYELEENTEKAVECYRRSVELNPTQKDLVLKIAELLCKNDVTDGRAKYWVERAAKLFPGSPAIYKLKEQLLDCEGEDGWNKLFDLIQSELYVRPDDVHVNIRLVELYRSTKRLKDAVAHCHEAERNIALRSSLEWNSCVVQTLKEYLESLQCLESDKSDWRATNTDLLLAYANLMLLTLSTRDVQENRELLESFDSALQSAKSSLGGNDELSATFLEMKGHFYMYAGSLLLKMGQHGNNVQWRALSELAALCYLIAFQVPRPKIKLREGKAGQNLLEMMACDRLSQSGHMLLSLSRGKQDFLKEVVETFANKIGQSALYDALFSSQSPKDTSFLGSDDIGKIDVQEPELEDLARYDVGAIRAHNGSLQHLTWLGLQWNSLPALPGIRKWLKQLFHRLPHETSRLETNAPESICILDLEVFLLGVVYTSHLQLKEKCNSHHSSYQPLCLPFPVCKQLCTERQKSWWDAVCTLIHRKAVPGNLAKLRLLVQHEINTLRAQEKHGLQPALLVHWAKYLQKTGSGLNSFYGQLEYIGRSVHYWKKVLPLLKIIKKNSIPEPIDPLFKHFHSVDIQASEIVEYEEDAHITFAILDAVNGNIEDAVTAFESIKSVVSYWNLALIFHRKAEDIENDALSPEEQEECRNYLTKTRDYLIKIIDDGDSNLSVVKKLPVPLESVKQMLNSVMQELEDYSEGGPLYKNGSLRNADSEIKHSTPSPTKYSLSPSKSYKYSPETPPRWTEDRNSLLNMICQQVEAIKKEMQELKLNSSKSASRHRWPTENYGPDSVPDGYQGSQTFHGAPLTVATTGPSVYYSQSPAYNSQYLLRPAANVTPTKGSSNTEFKSTKEGFSIPVSADGFKFGISEPGNQEKKREKPLENDTGLQAQDIRGRKKGRGVIFGQTSSTFTFADVAKSTSGEGFQFGKKDLNFKGFSGAGEKLFSSRYGKMANKANTSGDFEKDDDAYKTEDSDDIHFEPVVQMPEKVELVTGEEGEKVLYSQGVKLFRFDAEVRQWKERGLGNLKILKNEVNGKLRMLMRREQVLKVCANHWITTTMNLKPLSGSDRAWMWSASDFSDGDAKLERLAAKFKTPELAEEFKQKFEECQRLLLDIPLQTPHKLVDTGRAAKLIQRAEEMKSGLKDFKTFLTNDQTKVTEEENKGSGTGVAGASDTTIKPNAENTGPTLEWDNYDLREDALDDSVSSSSVHASPLASSPVRKNLFRFDESTTGSNFSFKSALSLSKSPAKLNQSGTSVGTDEESVVTQEEERDGQYFEPVVPLPDLVEVSSGEENEQVVFSHRAEIYRYDKDVGQWKERGIGDIKILQNYDNKQVRIVMRRDQVLKLCANHRITPDMSLQNMKGTERVWVWTACDFADGERKVEHLAVRFKLQDVADSFKKIFDEAKTAQEKDSLITPHVSRSSTPRESPCGKIAVAVLEEITRERTDVIQGDDVADAASEVEVSSTSETTTKAVVSPPKFVFVSESVKRIFSSEKSKPFAFGNSSATGSLFGFSFNAPLKSNNSETSSVAQSGSESKVEPKKCELSKNSDIEQSSDSKVKNLSASFPTEESSINYTFKTPEKEPPLWHAEFTKEELVQKLRSTTKSADHLNGLLREIEATNAVLMEQIKLLKSEIRRLERNQEREKSAANLEYLKNVLLQFIFLKPGSERERLLPVINTMLQLSPEEKGKLAAVAQDEEENPSRSSG.

A Phosphothreonine modification is found at threonine 19. Phosphoserine is present on serine 21. TPR repeat units follow at residues 26–59 (SMKG…QERD), 60–93 (PKAH…NPTQ), and 648–681 (EDAH…VSYW). The segment at 760–804 (GPLYKNGSLRNADSEIKHSTPSPTKYSLSPSKSYKYSPETPPRWT) is disordered. The span at 778 to 797 (STPSPTKYSLSPSKSYKYSP) shows a compositional bias: low complexity. The RanBD1 1 domain occupies 1036-1172 (HFEPVVQMPE…FEECQRLLLD (137 aa)). 2 disordered regions span residues 1216-1247 (TEEE…PTLE) and 1306-1330 (AKLN…EERD). A compositionally biased stretch (polar residues) spans 1231-1244 (SDTTIKPNAENTGP). Positions 1317–1329 (TDEESVVTQEEER) are enriched in acidic residues. The region spanning 1333-1469 (YFEPVVPLPD…FDEAKTAQEK (137 aa)) is the RanBD1 2 domain. Polar residues predominate over residues 1580–1593 (NNSETSSVAQSGSE). Disordered stretches follow at residues 1580–1621 (NNSE…KNLS) and 1746–1765 (KGKL…RSSG). The segment covering 1594–1617 (SKVEPKKCELSKNSDIEQSSDSKV) has biased composition (basic and acidic residues). One can recognise a GRIP domain in the interval 1702-1752 (REKSAANLEYLKNVLLQFIFLKPGSERERLLPVINTMLQLSPEEKGKLAAV).

As to quaternary structure, interacts with GTP-bound ARL1.

This Homo sapiens (Human) protein is RANBP2-like and GRIP domain-containing protein 8 (RGPD8).